Reading from the N-terminus, the 97-residue chain is Aspartyl/glutamyl-tRNA(Asn/Gln) amidotransferase subunit C (97 aa).

It belongs to the GatC family. As to quaternary structure, heterotrimer of A, B and C subunits.

The enzyme catalyses L-glutamyl-tRNA(Gln) + L-glutamine + ATP + H2O = L-glutaminyl-tRNA(Gln) + L-glutamate + ADP + phosphate + H(+). It catalyses the reaction L-aspartyl-tRNA(Asn) + L-glutamine + ATP + H2O = L-asparaginyl-tRNA(Asn) + L-glutamate + ADP + phosphate + 2 H(+). Allows the formation of correctly charged Asn-tRNA(Asn) or Gln-tRNA(Gln) through the transamidation of misacylated Asp-tRNA(Asn) or Glu-tRNA(Gln) in organisms which lack either or both of asparaginyl-tRNA or glutaminyl-tRNA synthetases. The reaction takes place in the presence of glutamine and ATP through an activated phospho-Asp-tRNA(Asn) or phospho-Glu-tRNA(Gln). In Synechococcus sp. (strain CC9605), this protein is Aspartyl/glutamyl-tRNA(Asn/Gln) amidotransferase subunit C.